The chain runs to 898 residues: Metalloprotease StcE (898 aa).

Positions 1 to 35 are cleaved as a signal peptide; it reads MNTKMNERWRTPMKLKYLSCTILAPLAIGVFSATA. One can recognise a Peptidase M66 domain in the interval 296-551; sequence ELLLHTIDIG…QRFFENKAVF (256 aa). Residue His-446 participates in Zn(2+) binding. Glu-447 is an active-site residue. Zn(2+) is bound by residues His-450 and His-456.

Requires Zn(2+) as cofactor.

The protein resides in the secreted. Its activity is regulated as follows. Inhibited by divalent cation chelators such as BPS and EDTA. In terms of biological role, virulence factor that contributes to intimate adherence of enterohemorrhagic E.coli (EHEC) O157:H7 to host cells. Is able to cleave the secreted human mucin 7 (MUC7) and the glycoprotein 340 (DMBT1/GP340). Also cleaves human C1 inhibitor (SERPING1), a regulator of multiple inflammatory pathways, and binds and localizes it to bacterial and host cell surfaces, protecting them from complement-mediated lysis. Therefore, the current model proposes two roles for StcE during infection: it acts first as a mucinase, allowing passage of EHEC through the oral cavity by cleaving the salivary glycoproteins that are responsible for bacterial aggregation. Similarly, in the colon, StcE cleaves the glycoproteins that protect the intestinal epithelial surface, allowing EHEC to come into close contact with host cell membranes. Secondly, it acts as an anti-inflammatory agent by localizing SERPING1 to cell membranes. The sequence is that of Metalloprotease StcE (stcE) from Escherichia coli O157:H7.